We begin with the raw amino-acid sequence, 217 residues long: Adenylate kinase (217 aa).

11–16 (GAGKGT) contacts ATP. The interval 31 to 60 (STGDMFREAMANETPVGLEAKSYIDKGDLV) is NMP. Residues T32, R37, 58 to 60 (DLV), 86 to 89 (GFPR), and Q93 contribute to the AMP site. Residues 127–165 (ARYICKNCGATYNKISNPTKVEGTCDRCGGHEFFQREDD) form an LID region. R128 is a binding site for ATP. Residues C131 and C134 each coordinate Zn(2+). 137–138 (TY) lines the ATP pocket. Residues C151 and C154 each contribute to the Zn(2+) site. AMP-binding residues include R162 and R173. An ATP-binding site is contributed by Q201.

Belongs to the adenylate kinase family. Monomer.

The protein localises to the cytoplasm. It catalyses the reaction AMP + ATP = 2 ADP. It functions in the pathway purine metabolism; AMP biosynthesis via salvage pathway; AMP from ADP: step 1/1. Functionally, catalyzes the reversible transfer of the terminal phosphate group between ATP and AMP. Plays an important role in cellular energy homeostasis and in adenine nucleotide metabolism. This is Adenylate kinase from Lactobacillus gasseri (strain ATCC 33323 / DSM 20243 / BCRC 14619 / CIP 102991 / JCM 1131 / KCTC 3163 / NCIMB 11718 / NCTC 13722 / AM63).